Here is an 84-residue protein sequence, read N- to C-terminus: Small ribosomal subunit protein uS17 (84 aa).

This sequence belongs to the universal ribosomal protein uS17 family. As to quaternary structure, part of the 30S ribosomal subunit.

Functionally, one of the primary rRNA binding proteins, it binds specifically to the 5'-end of 16S ribosomal RNA. This Hamiltonella defensa subsp. Acyrthosiphon pisum (strain 5AT) protein is Small ribosomal subunit protein uS17.